Here is a 136-residue protein sequence, read N- to C-terminus: Histone H3, embryonic (136 aa).

The segment at 1–43 is disordered; the sequence is MARTKQTARKSTGGKAPRKQLATKAARKSAPATGGVKKPHRYR. N6-methylated lysine is present on Lys-5. Residue Lys-10 is modified to N6-acetyllysine; alternate. Lys-10 is modified (N6-methylated lysine; alternate). The residue at position 11 (Ser-11) is a Phosphoserine. N6-acetyllysine occurs at positions 15 and 24. N6-methylated lysine occurs at positions 28, 37, and 80.

This sequence belongs to the histone H3 family. In terms of assembly, the nucleosome is a histone octamer containing two molecules each of H2A, H2B, H3 and H4 assembled in one H3-H4 heterotetramer and two H2A-H2B heterodimers. The octamer wraps approximately 147 bp of DNA. In terms of processing, acetylation is generally linked to gene activation. Post-translationally, methylation at Lys-5 is linked to gene activation. Methylation at Lys-10 is linked to gene repression.

Its subcellular location is the nucleus. It localises to the chromosome. Functionally, core component of nucleosome. Nucleosomes wrap and compact DNA into chromatin, limiting DNA accessibility to the cellular machineries which require DNA as a template. Histones thereby play a central role in transcription regulation, DNA repair, DNA replication and chromosomal stability. DNA accessibility is regulated via a complex set of post-translational modifications of histones, also called histone code, and nucleosome remodeling. The protein is Histone H3, embryonic of Strongylocentrotus purpuratus (Purple sea urchin).